Reading from the N-terminus, the 718-residue chain is Heme peroxidase 2 (718 aa).

Residues M1–T19 form the signal peptide. Positions F20 to P146 are excised as a propeptide. 2 disordered regions span residues R41–D64 and L108–S144. Polar residues predominate over residues N45–D64. Residues L109–T118 show a composition bias toward low complexity. A compositionally biased stretch (basic residues) spans S126–N139. A disulfide bond links C149 and C164. The active-site Proton acceptor is H241. Residue D242 participates in Ca(2+) binding. A disulfide bridge connects residues C262 and C272. Ca(2+) contacts are provided by S311, F313, D315, and S317. An N-linked (GlcNAc...) asparagine glycan is attached at N354. A disulfide bridge links C358 with C366. A heme b-binding site is contributed by H477. N-linked (GlcNAc...) asparagine glycosylation is found at N551, N592, N662, and N673. A disulfide bond links C682 and C705.

The protein belongs to the peroxidase family. Heme b serves as cofactor. As to expression, expressed in the hypodermis and gland cells of the pharynx. Specifically, there is low and transient expression from the distal bulb of the pharynx to the anterior of the buccal cavity. Whole body expression levels increase upon entry into the dauer phase.

It localises to the secreted. The enzyme catalyses 2 a phenolic donor + H2O2 = 2 a phenolic radical donor + 2 H2O. Its function is as follows. Peroxidase which is involved in maintaining the cuticle integrity in the hypodermis and pharynx. It thus plays a role in conferring resistance against Gram-positive bacteria such as E.faecalis, S.aureus and C.diphtheriae, and yeast such as C.albicans. This is Heme peroxidase 2 from Caenorhabditis elegans.